A 234-amino-acid chain; its full sequence is Adenosine 5'-phosphosulfate reductase (234 aa).

[4Fe-4S] cluster is bound by residues Cys-120, Cys-121, Cys-203, and Cys-206. Catalysis depends on Cys-229, which acts as the Nucleophile; cysteine thiosulfonate intermediate.

The protein belongs to the PAPS reductase family. CysH subfamily. [4Fe-4S] cluster serves as cofactor.

The protein localises to the cytoplasm. It catalyses the reaction [thioredoxin]-disulfide + sulfite + AMP + 2 H(+) = adenosine 5'-phosphosulfate + [thioredoxin]-dithiol. Its pathway is sulfur metabolism; hydrogen sulfide biosynthesis; sulfite from sulfate. Catalyzes the formation of sulfite from adenosine 5'-phosphosulfate (APS) using thioredoxin as an electron donor. The chain is Adenosine 5'-phosphosulfate reductase from Bacillus thuringiensis (strain Al Hakam).